A 254-amino-acid polypeptide reads, in one-letter code: Glc operon transcriptional activator (254 aa).

The HTH gntR-type domain maps to 6–74 (RPICEVVAES…QGRDSRVARL (69 aa)). The H-T-H motif DNA-binding region spans 34–53 (ERRLCEKLGFSRSALREGLT).

Its function is as follows. Transcriptional activator of the glcDEFGB operon which is associated with glycolate utilization, and encodes malate synthase G and the genes needed for glycolate oxidase activity. Also negatively regulates the transcription of its own gene. Glycolate acts as an effector, but GlcC can also use acetate as an alternative effector. This is Glc operon transcriptional activator (glcC) from Escherichia coli O6:H1 (strain CFT073 / ATCC 700928 / UPEC).